Reading from the N-terminus, the 69-residue chain is Cytochrome c oxidase subunit 8A, mitochondrial (69 aa).

The transit peptide at 1–25 directs the protein to the mitochondrion; it reads MSVLTPLLLRSLTGSARRLMVPRAQ. The short motif at 2–19 is the SIFI-degron element; that stretch reads SVLTPLLLRSLTGSARRL. Residues 26-36 lie on the Mitochondrial matrix side of the membrane; the sequence is VHSKPAREQLG. The helical transmembrane segment at 37 to 60 threads the bilayer; it reads VLDITIGLTSCFVCCLLPAGWVLS. Residues 61-69 lie on the Mitochondrial intermembrane side of the membrane; that stretch reads HLESYKKRE.

The protein belongs to the cytochrome c oxidase VIII family. Component of the cytochrome c oxidase (complex IV, CIV), a multisubunit enzyme composed of 14 subunits. The complex is composed of a catalytic core of 3 subunits MT-CO1, MT-CO2 and MT-CO3, encoded in the mitochondrial DNA, and 11 supernumerary subunits COX4I, COX5A, COX5B, COX6A, COX6B, COX6C, COX7A, COX7B, COX7C, COX8 and NDUFA4, which are encoded in the nuclear genome. The complex exists as a monomer or a dimer and forms supercomplexes (SCs) in the inner mitochondrial membrane with NADH-ubiquinone oxidoreductase (complex I, CI) and ubiquinol-cytochrome c oxidoreductase (cytochrome b-c1 complex, complex III, CIII), resulting in different assemblies (supercomplex SCI(1)III(2)IV(1) and megacomplex MCI(2)III(2)IV(2)). Post-translationally, in response to mitochondrial stress, the precursor protein is ubiquitinated by the SIFI complex in the cytoplasm before mitochondrial import, leading to its degradation. Within the SIFI complex, UBR4 initiates ubiquitin chain that are further elongated or branched by KCMF1.

The protein localises to the mitochondrion inner membrane. It functions in the pathway energy metabolism; oxidative phosphorylation. Functionally, component of the cytochrome c oxidase, the last enzyme in the mitochondrial electron transport chain which drives oxidative phosphorylation. The respiratory chain contains 3 multisubunit complexes succinate dehydrogenase (complex II, CII), ubiquinol-cytochrome c oxidoreductase (cytochrome b-c1 complex, complex III, CIII) and cytochrome c oxidase (complex IV, CIV), that cooperate to transfer electrons derived from NADH and succinate to molecular oxygen, creating an electrochemical gradient over the inner membrane that drives transmembrane transport and the ATP synthase. Cytochrome c oxidase is the component of the respiratory chain that catalyzes the reduction of oxygen to water. Electrons originating from reduced cytochrome c in the intermembrane space (IMS) are transferred via the dinuclear copper A center (CU(A)) of subunit 2 and heme A of subunit 1 to the active site in subunit 1, a binuclear center (BNC) formed by heme A3 and copper B (CU(B)). The BNC reduces molecular oxygen to 2 water molecules using 4 electrons from cytochrome c in the IMS and 4 protons from the mitochondrial matrix. This Mus musculus (Mouse) protein is Cytochrome c oxidase subunit 8A, mitochondrial (Cox8a).